A 417-amino-acid chain; its full sequence is NADH-quinone oxidoreductase subunit D (417 aa).

The protein belongs to the complex I 49 kDa subunit family. In terms of assembly, NDH-1 is composed of 14 different subunits. Subunits NuoB, C, D, E, F, and G constitute the peripheral sector of the complex.

The protein resides in the cell inner membrane. The catalysed reaction is a quinone + NADH + 5 H(+)(in) = a quinol + NAD(+) + 4 H(+)(out). Its function is as follows. NDH-1 shuttles electrons from NADH, via FMN and iron-sulfur (Fe-S) centers, to quinones in the respiratory chain. The immediate electron acceptor for the enzyme in this species is believed to be ubiquinone. Couples the redox reaction to proton translocation (for every two electrons transferred, four hydrogen ions are translocated across the cytoplasmic membrane), and thus conserves the redox energy in a proton gradient. The chain is NADH-quinone oxidoreductase subunit D from Francisella philomiragia subsp. philomiragia (strain ATCC 25017 / CCUG 19701 / FSC 153 / O#319-036).